We begin with the raw amino-acid sequence, 38 residues long: Large ribosomal subunit protein bL36 (38 aa).

This sequence belongs to the bacterial ribosomal protein bL36 family.

The sequence is that of Large ribosomal subunit protein bL36 from Acholeplasma laidlawii (strain PG-8A).